The following is a 901-amino-acid chain: Aconitate hydratase A (901 aa).

The [4Fe-4S] cluster site is built by cysteine 443, cysteine 509, and cysteine 512.

Belongs to the aconitase/IPM isomerase family. Monomer. [4Fe-4S] cluster serves as cofactor.

The enzyme catalyses citrate = D-threo-isocitrate. It carries out the reaction (2S,3R)-3-hydroxybutane-1,2,3-tricarboxylate = 2-methyl-cis-aconitate + H2O. It functions in the pathway carbohydrate metabolism; tricarboxylic acid cycle; isocitrate from oxaloacetate: step 2/2. It participates in organic acid metabolism; propanoate degradation. Involved in the catabolism of short chain fatty acids (SCFA) via the tricarboxylic acid (TCA)(acetyl degradation route) and probably the 2-methylcitrate cycle I (propionate degradation route). Catalyzes the reversible isomerization of citrate to isocitrate via cis-aconitate. Could catalyze the hydration of 2-methyl-cis-aconitate to yield (2R,3S)-2-methylisocitrate. The apo form of AcnA functions as a RNA-binding regulatory protein. This is Aconitate hydratase A (acnA) from Staphylococcus aureus (strain MRSA252).